Here is a 170-residue protein sequence, read N- to C-terminus: MARVEL domain-containing protein 1 (170 aa).

Topologically, residues 1-38 (MEGERPRSDTVTTTVSSHMETISLGGSIAYDRSFLRSP) are cytoplasmic. The MARVEL domain occupies 34–167 (FLRSPTGVLL…STYFSFQAWR (134 aa)). The chain crosses the membrane as a helical span at residues 39-59 (TGVLLLMEIMFGLLVWALIAG). Over 60-67 (SEYFLFSA) the chain is Extracellular. Residues 68 to 88 (FGWVMFVAVFYWVLSVFFFLL) traverse the membrane as a helical segment. Residues 89 to 102 (HLTRANTRITKVPW) are Cytoplasmic-facing. Residues 103–123 (SLVGLCFNGSAFVLYLIAAVV) form a helical membrane-spanning segment. Residues 124-145 (EASSVNKDVHQHHNYNSWTASS) are Extracellular-facing. Residues 146–166 (FFAFIVTVCYALSTYFSFQAW) form a helical membrane-spanning segment. Topologically, residues 167 to 170 (RTKS) are cytoplasmic.

The protein resides in the membrane. The protein localises to the nucleus. This is MARVEL domain-containing protein 1 (marveld1) from Xenopus laevis (African clawed frog).